Here is a 440-residue protein sequence, read N- to C-terminus: Elongation factor 1-gamma (440 aa).

An N-acetylalanine modification is found at Ala-2. The 86-residue stretch at 2 to 87 (AAGTLYTYPE…YVSNEELRGS (86 aa)) folds into the GST N-terminal domain. In terms of domain architecture, GST C-terminal spans 88–216 (TPEAAAQVVQ…VKLCEKMAQF (129 aa)). 2 positions are modified to N6-acetyllysine: Lys-147 and Lys-212. Basic and acidic residues predominate over residues 221-257 (FAESQPKKDTPRKEKGSREEKLKPQAERKEGKEEKKA). The segment at 221–267 (FAESQPKKDTPRKEKGSREEKLKPQAERKEGKEEKKAAAPAPEEELD) is disordered. A Glycyl lysine isopeptide (Lys-Gly) (interchain with G-Cter in SUMO1) cross-link involves residue Lys-256. Positions 279–440 (AKDPFAHLPK…KAFNQGKIFK (162 aa)) constitute an EF-1-gamma C-terminal domain. Lys-288 is covalently cross-linked (Glycyl lysine isopeptide (Lys-Gly) (interchain with G-Cter in SUMO2)). An N6-acetyllysine modification is found at Lys-404. Residue Lys-437 is modified to N6-acetyllysine; alternate. Position 437 is an N6-malonyllysine; alternate (Lys-437).

EF-1 is composed of four subunits: alpha, beta, delta, and gamma.

Its function is as follows. Probably plays a role in anchoring the complex to other cellular components. In Bos taurus (Bovine), this protein is Elongation factor 1-gamma (EEF1G).